A 47-amino-acid chain; its full sequence is Delta-actitoxin-Ael1b (47 aa).

Cystine bridges form between cysteine 4/cysteine 44, cysteine 6/cysteine 34, and cysteine 27/cysteine 45.

The protein belongs to the sea anemone sodium channel inhibitory toxin family. Type I subfamily.

The protein localises to the secreted. It is found in the nematocyst. Functionally, produces a positive inotropic effect in mammalian heart muscle. Modifies current passing through the fast sodium channel (Nav) in neuroblastoma cells, leading to delayed and incomplete inactivation. Paralyzes the shore crab (C.maenas) by tetanic contractions after intramuscular injection. This chain is Delta-actitoxin-Ael1b, found in Anthopleura elegantissima (Green aggregating anemone).